The following is a 681-amino-acid chain: Methionine--tRNA ligase (681 aa).

The 'HIGH' region signature appears at 27–37 (DYANGTPHIGH). The 'KMSKS' region signature appears at 316–320 (KMGKS). Lys-319 contacts ATP. Residues 522–571 (FPKPEPKADETKNAEAKPPKPQAKKEKKTVTDTAPAKTTEQKPEAAAPAQ) form a disordered region. Over residues 525–539 (PEPKADETKNAEAKP) the composition is skewed to basic and acidic residues. One can recognise a tRNA-binding domain in the interval 580–681 (DFAKIDLRIA…LDLPSGTKVR (102 aa)).

It belongs to the class-I aminoacyl-tRNA synthetase family. MetG type 2B subfamily. As to quaternary structure, homodimer.

The protein localises to the cytoplasm. It carries out the reaction tRNA(Met) + L-methionine + ATP = L-methionyl-tRNA(Met) + AMP + diphosphate. Is required not only for elongation of protein synthesis but also for the initiation of all mRNA translation through initiator tRNA(fMet) aminoacylation. The polypeptide is Methionine--tRNA ligase (metG) (Deinococcus radiodurans (strain ATCC 13939 / DSM 20539 / JCM 16871 / CCUG 27074 / LMG 4051 / NBRC 15346 / NCIMB 9279 / VKM B-1422 / R1)).